Reading from the N-terminus, the 1488-residue chain is Chromosome partition protein MukB (1488 aa).

34–41 contributes to the ATP binding site; that stretch reads GGNGAGKS. Coiled-coil stretches lie at residues 326 to 418, 444 to 472, and 509 to 602; these read LEAD…QYNQ, LDTFQAKEQEATEKLLSLEQKMSVAQTAH, and RHLA…QRAP. The segment at 666–783 is flexible hinge; it reads PGGAEDQRLN…SLPIFGRAAR (118 aa). 3 coiled-coil regions span residues 835-923, 977-1116, and 1209-1265; these read EAEI…AKLE, EMLS…AKAG, and VEAI…LQSV. Residues 1049-1074 are disordered; sequence ADSGAEERARQRRDELHAQLSNNRSR. Residues 1051-1065 show a composition bias toward basic and acidic residues; sequence SGAEERARQRRDELH.

The protein belongs to the SMC family. MukB subfamily. As to quaternary structure, homodimerization via its hinge domain. Binds to DNA via its C-terminal region. Interacts, and probably forms a ternary complex, with MukE and MukF via its C-terminal region. The complex formation is stimulated by calcium or magnesium. Interacts with tubulin-related protein FtsZ.

The protein resides in the cytoplasm. The protein localises to the nucleoid. Its function is as follows. Plays a central role in chromosome condensation, segregation and cell cycle progression. Functions as a homodimer, which is essential for chromosome partition. Involved in negative DNA supercoiling in vivo, and by this means organize and compact chromosomes. May achieve or facilitate chromosome segregation by condensation DNA from both sides of a centrally located replisome during cell division. The sequence is that of Chromosome partition protein MukB from Salmonella schwarzengrund (strain CVM19633).